A 96-amino-acid chain; its full sequence is Protein RnfH (96 aa).

The protein belongs to the UPF0125 (RnfH) family.

The protein is Protein RnfH of Klebsiella pneumoniae (strain 342).